The chain runs to 85 residues: Small ribosomal subunit protein bS20 (85 aa).

The tract at residues 1–22 is disordered; it reads MPQIKSAIKRVKTQNATNKRNA. A compositionally biased stretch (polar residues) spans 13-22; that stretch reads TQNATNKRNA.

It belongs to the bacterial ribosomal protein bS20 family.

Its function is as follows. Binds directly to 16S ribosomal RNA. In Lactobacillus acidophilus (strain ATCC 700396 / NCK56 / N2 / NCFM), this protein is Small ribosomal subunit protein bS20.